Reading from the N-terminus, the 349-residue chain is Cell adhesion molecule CEACAM8 (349 aa).

The signal sequence occupies residues 1 to 34; that stretch reads MGPISAPSCRWRIPWQGLLLTASLFTFWNPPTTA. Positions 35-142 constitute an Ig-like V-type domain; that stretch reads QLTIEAVPSN…EVTGQFSVHP (108 aa). Asparagine 104, asparagine 111, asparagine 115, asparagine 152, asparagine 173, asparagine 197, asparagine 224, asparagine 256, asparagine 274, asparagine 288, and asparagine 309 each carry an N-linked (GlcNAc...) asparagine glycan. Ig-like C2-type domains lie at 145–232 and 237–319; these read PKPS…VTLN and PDAP…ITVS. Cysteine 167 and cysteine 215 are joined by a disulfide. A disulfide bond links cysteine 259 and cysteine 299. Residue aspartate 320 is the site of GPI-anchor amidated aspartate attachment. The propeptide at 321 to 349 is removed in mature form; it reads ALVQGSSPGLSARATVSIMIGVLARVALI.

The protein belongs to the immunoglobulin superfamily. CEA family. Monomer. Heterodimer with CEACAM6; heterodimerizes via its Ig-like V-type domain. Glycosylated. Expressed in leukocytes of chronic myeloid Leukemia patients and bone marrow.

It is found in the cell membrane. The protein localises to the cell surface. In terms of biological role, cell surface glycoprotein that plays a role in cell adhesion in a calcium-independent manner. Mediates heterophilic cell adhesion with other carcinoembryonic antigen-related cell adhesion molecules, such as CEACAM6. Heterophilic interaction with CEACAM8 occurs in activated neutrophils. The sequence is that of Cell adhesion molecule CEACAM8 from Homo sapiens (Human).